The chain runs to 252 residues: MRVLLSNDDGFHANGIKALKEIVIKSGIASEIWVVAPLNNCSGSGRSVGLNVKVQVSKVSDTEFIVDSTPSTSVFLALRKIMNYKPDLILSGINHGVNIGNDVWYSGTVAAAAEGAAINIPSIAISQEYDNKSGEINWVNPQRFLKQIIEMLVNVSFWNKSTVMNVNFPLMPAKGIKFTDQGKYVPCNEIEKNESSDDSNVSYTITRITPNKKNRAQCDGSIKAIDEGYITITPLKFDMTDFDVLTSLNSLK.

4 residues coordinate a divalent metal cation: Asp8, Asp9, Ser42, and Asn94.

It belongs to the SurE nucleotidase family. A divalent metal cation is required as a cofactor.

The protein resides in the cytoplasm. The enzyme catalyses a ribonucleoside 5'-phosphate + H2O = a ribonucleoside + phosphate. Functionally, nucleotidase that shows phosphatase activity on nucleoside 5'-monophosphates. This Ehrlichia ruminantium (strain Gardel) protein is 5'-nucleotidase SurE.